Consider the following 506-residue polypeptide: NAD(P)H-quinone oxidoreductase subunit 2 (506 aa).

The next 14 membrane-spanning stretches (helical) occupy residues 14-34 (AIIP…VDLA), 42-62 (WAPV…ALQW), 79-99 (LAIA…LISW), 108-128 (PIGE…LLCG), 132-152 (LVSV…LSGY), 167-187 (LLVG…LYGL), 206-226 (FITS…IAAV), 240-260 (PTPV…AFAI), 276-296 (LLFT…ALAQ), 302-322 (MLAY…VSGT), 330-350 (VLYL…VILF), 374-394 (LGLS…GFFG), 409-429 (LLVV…ISVI), and 462-482 (IALY…NPLF).

It belongs to the complex I subunit 2 family. As to quaternary structure, NDH-1 can be composed of about 15 different subunits; different subcomplexes with different compositions have been identified which probably have different functions.

The protein resides in the cellular thylakoid membrane. It catalyses the reaction a plastoquinone + NADH + (n+1) H(+)(in) = a plastoquinol + NAD(+) + n H(+)(out). The enzyme catalyses a plastoquinone + NADPH + (n+1) H(+)(in) = a plastoquinol + NADP(+) + n H(+)(out). In terms of biological role, NDH-1 shuttles electrons from an unknown electron donor, via FMN and iron-sulfur (Fe-S) centers, to quinones in the respiratory and/or the photosynthetic chain. The immediate electron acceptor for the enzyme in this species is believed to be plastoquinone. Couples the redox reaction to proton translocation, and thus conserves the redox energy in a proton gradient. Cyanobacterial NDH-1 also plays a role in inorganic carbon-concentration. The protein is NAD(P)H-quinone oxidoreductase subunit 2 of Prochlorococcus marinus subsp. pastoris (strain CCMP1986 / NIES-2087 / MED4).